Consider the following 488-residue polypeptide: Glycogen synthase (488 aa).

Lysine 16 is an ADP-alpha-D-glucose binding site.

Belongs to the glycosyltransferase 1 family. Bacterial/plant glycogen synthase subfamily.

The catalysed reaction is [(1-&gt;4)-alpha-D-glucosyl](n) + ADP-alpha-D-glucose = [(1-&gt;4)-alpha-D-glucosyl](n+1) + ADP + H(+). It functions in the pathway glycan biosynthesis; glycogen biosynthesis. Functionally, synthesizes alpha-1,4-glucan chains using ADP-glucose. This Marinobacter nauticus (strain ATCC 700491 / DSM 11845 / VT8) (Marinobacter aquaeolei) protein is Glycogen synthase.